Consider the following 207-residue polypeptide: Oligoribonuclease (207 aa).

An Exonuclease domain is found at 20-183; it reads LVWLDMEMTG…ADIHESIDEL (164 aa). Tyr141 is an active-site residue.

Belongs to the oligoribonuclease family.

The protein localises to the cytoplasm. In terms of biological role, 3'-to-5' exoribonuclease specific for small oligoribonucleotides. This chain is Oligoribonuclease, found in Paraburkholderia xenovorans (strain LB400).